Here is a 123-residue protein sequence, read N- to C-terminus: Small ribosomal subunit protein uS12 (123 aa).

Residues 1–26 form a disordered region; the sequence is MPTLNQLVRKPRKRPVAKSKVPALDA. D89 carries the 3-methylthioaspartic acid modification. Positions 104-123 are disordered; it reads TAGVKNRKQSRSKYGAKRPK. Residues 108 to 123 show a composition bias toward basic residues; sequence KNRKQSRSKYGAKRPK.

This sequence belongs to the universal ribosomal protein uS12 family. In terms of assembly, part of the 30S ribosomal subunit. Contacts proteins S8 and S17. May interact with IF1 in the 30S initiation complex.

Its function is as follows. With S4 and S5 plays an important role in translational accuracy. In terms of biological role, interacts with and stabilizes bases of the 16S rRNA that are involved in tRNA selection in the A site and with the mRNA backbone. Located at the interface of the 30S and 50S subunits, it traverses the body of the 30S subunit contacting proteins on the other side and probably holding the rRNA structure together. The combined cluster of proteins S8, S12 and S17 appears to hold together the shoulder and platform of the 30S subunit. This chain is Small ribosomal subunit protein uS12, found in Acidithiobacillus ferrooxidans (strain ATCC 23270 / DSM 14882 / CIP 104768 / NCIMB 8455) (Ferrobacillus ferrooxidans (strain ATCC 23270)).